The following is a 426-amino-acid chain: MAAPQLIFVDGTFAELAQEMAEYVQIGEQVKPYLAKEQNEEALQAIIEASHVLNSIPEKEFTGAYNLLIHLVLQSKDPLKYLPPLCGNLQKPITSSPAHGFTLAANALSTVFNLLEPDNPTRFNVLLQITRFIRQHGQYDLLKPRLENLEGWFNLWNTSDEDQRRLYVEVSDTAAEAGDDEDSYRYLIKAIATFGREDQDEITSEEAQKLSLKAVRLAISHPARFDFQDLRILPSVQALGDSHPVYSQLLDIFIEQDLEDYNDFKDEHEGWVEKEKLDNEKLQRKMRLLTFASLAASTPNREIPYANIAKALQIPSEEVEMWTIDVVRAKLVEGRLSQQQKVFLVHRTTYRVFGEKQWRELATRVDQYKSIVDQLLVFLRKGQADVEGQREREQQELERKLAGAGMGGGPGGDRRRQQKPRTDEDD.

Residues 179–350 (DDEDSYRYLI…KVFLVHRTTY (172 aa)) enclose the PCI domain. Residues 385-401 (DVEGQREREQQELERKL) are compositionally biased toward basic and acidic residues. A disordered region spans residues 385 to 426 (DVEGQREREQQELERKLAGAGMGGGPGGDRRRQQKPRTDEDD).

This sequence belongs to the eIF-3 subunit M family. In terms of assembly, component of the eukaryotic translation initiation factor 3 (eIF-3) complex.

The protein resides in the cytoplasm. In terms of biological role, component of the eukaryotic translation initiation factor 3 (eIF-3) complex, which is involved in protein synthesis of a specialized repertoire of mRNAs and, together with other initiation factors, stimulates binding of mRNA and methionyl-tRNAi to the 40S ribosome. The eIF-3 complex specifically targets and initiates translation of a subset of mRNAs involved in cell proliferation. This chain is Eukaryotic translation initiation factor 3 subunit M, found in Chaetomium globosum (strain ATCC 6205 / CBS 148.51 / DSM 1962 / NBRC 6347 / NRRL 1970) (Soil fungus).